The following is a 250-amino-acid chain: uncharacterized protein (250 aa).

The chain crosses the membrane as a helical span at residues 4–24; it reads FKYLLFLVVFAVFFLTFAFFD.

It is found in the membrane. This is an uncharacterized protein from Methanocaldococcus jannaschii (strain ATCC 43067 / DSM 2661 / JAL-1 / JCM 10045 / NBRC 100440) (Methanococcus jannaschii).